Consider the following 1687-residue polypeptide: Brefeldin A-inhibited guanine nucleotide-exchange protein 1 (1687 aa).

Positions 494–529 (SLENEAPANNHSNSNEEDGTTIDHDFHPDLNPESSD) are disordered. A compositionally biased stretch (basic and acidic residues) spans 514–523 (TIDHDFHPDL). The SEC7 domain maps to 532 to 719 (TLEQRRAYKI…GALYDQVVIN (188 aa)). Residue Glu-634 is part of the active site. Residues 1229–1248 (KGRSSSPSTPVTDDHSPSTQ) form a disordered region. Polar residues predominate over residues 1232–1248 (SSSPSTPVTDDHSPSTQ).

As to quaternary structure, homodimer.

The protein localises to the cytoplasm. The protein resides in the cytosol. Its subcellular location is the membrane. Its activity is regulated as follows. Inhibited by brefeldin A. In terms of biological role, activates the ARF proteins by exchanging bound GDP for free GTP. Plays a role in vesicular protein sorting. This Arabidopsis thaliana (Mouse-ear cress) protein is Brefeldin A-inhibited guanine nucleotide-exchange protein 1 (BIG1).